A 172-amino-acid polypeptide reads, in one-letter code: Pollen-specific protein-like At4g18596 (172 aa).

An N-terminal signal peptide occupies residues 1-27 (MASKAIFFFFVSAVCLSSLAGVAIADA). Disulfide bonds link cysteine 41/cysteine 112, cysteine 44/cysteine 157, and cysteine 65/cysteine 100. Residue asparagine 70 is glycosylated (N-linked (GlcNAc...) asparagine).

Belongs to the Ole e I family.

Its subcellular location is the secreted. This chain is Pollen-specific protein-like At4g18596, found in Arabidopsis thaliana (Mouse-ear cress).